A 153-amino-acid chain; its full sequence is Small ribosomal subunit protein uS19 (153 aa).

Residues 1–63 (MGFRGAWNKR…QEIWDEFRAF (63 aa)) are unknown. The tract at residues 64–153 (VNKKAWVDPK…EKSAKVVKKK (90 aa)) is small ribosomal subunit protein uS19.

This sequence belongs to the universal ribosomal protein uS19 family.

In terms of biological role, protein S19 forms a complex with S13 that binds strongly to the 16S ribosomal RNA. This Hydrogenobaculum sp. (strain Y04AAS1) protein is Small ribosomal subunit protein uS19.